Consider the following 1133-residue polypeptide: ATP-dependent DNA helicase homolog MER3 (1133 aa).

The region spanning 34–229 (PLCFHSDINM…WLKVPTAGIK (196 aa)) is the Helicase ATP-binding domain. 47–54 (APTGSGKT) contributes to the ATP binding site. The DEVH box motif lies at 165–168 (DEVH). The Helicase C-terminal domain occupies 263 to 460 (YIYDILMQYS…CLIEHLTAEI (198 aa)). In terms of domain architecture, SEC63 spans 536–847 (EPGRLMTKYY…FEEYIGIDLH (312 aa)). The interval 878 to 919 (ACIADDDNPVTSGPSNRKDKKDDMPSFKLIDDDSEEEKEPYV) is disordered. Residues 893–908 (NRKDKKDDMPSFKLID) are compositionally biased toward basic and acidic residues. Over residues 909-919 (DDSEEEKEPYV) the composition is skewed to acidic residues.

This sequence belongs to the helicase family. SKI2 subfamily. Expressed in meiocytes during meiosis.

The protein resides in the nucleus. The enzyme catalyses Couples ATP hydrolysis with the unwinding of duplex DNA by translocating in the 3'-5' direction.. It carries out the reaction ATP + H2O = ADP + phosphate + H(+). Functionally, DNA helicase required for crossover formation, complete synapsis of homologous chromosomes and bivalent formation during meiosis. Is specific to recombination events resulting in interference-sensitive crossovers (class I meiotic crossover). The chain is ATP-dependent DNA helicase homolog MER3 from Arabidopsis thaliana (Mouse-ear cress).